The sequence spans 427 residues: Transcobalamin-2 (427 aa).

The first 18 residues, 1 to 18, serve as a signal peptide directing secretion; the sequence is MELLKALLLLSGVLGALA. Disulfide bonds link C21–C268, C116–C310, and C165–C208. Cob(II)alamin contacts are provided by residues 152-156, H193, 193-197, N245, S248, Q292, and 395-397; these read TSYYQ, HLSVD, and WQL.

This sequence belongs to the eukaryotic cobalamin transport proteins family. In terms of assembly, interacts with CD320 (via LDL-receptor class A domains).

The protein resides in the secreted. Its function is as follows. Primary vitamin B12-binding and transport protein. Delivers cobalamin to cells. This is Transcobalamin-2 (Tcn2) from Rattus norvegicus (Rat).